The primary structure comprises 112 residues: Large ribosomal subunit protein P2A (112 aa).

Residues 83–112 form a disordered region; sequence GAAPAAEAKKEEKVEEKEESDDDMGFSLFD. The span at 89–98 shows a compositional bias: basic and acidic residues; that stretch reads EAKKEEKVEE.

The protein belongs to the eukaryotic ribosomal protein P1/P2 family. As to quaternary structure, P1 and P2 exist as dimers at the large ribosomal subunit. In terms of processing, phosphorylated.

Plays an important role in the elongation step of protein synthesis. This Zea mays (Maize) protein is Large ribosomal subunit protein P2A (RPP2A).